The primary structure comprises 819 residues: THO complex subunit 5B (819 aa).

Positions 285 to 332 (ARQQSRKDSGMSSNTESSRLEDDGPDDDDDGQRRRKRPKKLTSKEGSD) are disordered.

The protein belongs to the THOC5 family. Component of the THO complex, which is composed of THO1, THO2, THO3, THO5, THO6 and THO7.

Its subcellular location is the nucleus. In terms of biological role, acts as a component of the THO subcomplex of the TREX complex which is thought to couple mRNA transcription, processing and nuclear export. This Arabidopsis thaliana (Mouse-ear cress) protein is THO complex subunit 5B (THO5B).